The sequence spans 382 residues: MKQPVIIAAKRIAFGKYGGRLKHLEPESLLEPLFNHFTDQYPKVMSLLDDVILGNTVGNGGNLARKSLLEAGLDFKIPGITIDRQCGSGLEAVIQACRMVQSGAGTIYIAGGVESTSRAPWKIKRPQSVYESEFPQFFERAPFAREGEDPSMIEAAENVAKKYHISRNEQDDFAYRSHQLASKNMNNGNISQEILPFKVKGECFNQDESIKPQLTLKTLGRLKPLLNEGTVTVGNSCMKNDGAVLLIVMEENRARQLGFTEGIKFVNSATVGVQPQYLGVGPVPAVNQLLARERLTINDINAVELNEAFSSQVIASQQQLNIPLNKLNCWGGAIATGHPYGASGAALVTRLFYMKHQFRTVATMGIGGGIGNAALFERWYGN.

The active-site Acyl-thioester intermediate is the C86. H338 serves as the catalytic Proton acceptor.

This sequence belongs to the thiolase-like superfamily. Thiolase family.

This chain is Putative acetyl-CoA C-acetyltransferase VraB (vraB), found in Staphylococcus epidermidis (strain ATCC 35984 / DSM 28319 / BCRC 17069 / CCUG 31568 / BM 3577 / RP62A).